A 197-amino-acid chain; its full sequence is Imidazoleglycerol-phosphate dehydratase (197 aa).

Belongs to the imidazoleglycerol-phosphate dehydratase family.

The protein localises to the cytoplasm. It catalyses the reaction D-erythro-1-(imidazol-4-yl)glycerol 3-phosphate = 3-(imidazol-4-yl)-2-oxopropyl phosphate + H2O. It participates in amino-acid biosynthesis; L-histidine biosynthesis; L-histidine from 5-phospho-alpha-D-ribose 1-diphosphate: step 6/9. The protein is Imidazoleglycerol-phosphate dehydratase of Pseudomonas syringae pv. syringae (strain B728a).